A 91-amino-acid chain; its full sequence is Small ribosomal subunit protein bS16 (91 aa).

It belongs to the bacterial ribosomal protein bS16 family. Part of the 30S ribosomal subunit.

Functionally, binds to the lower part of the body of the 30S subunit, where it stabilizes two of its domains. This is Small ribosomal subunit protein bS16 from Thermus thermophilus.